We begin with the raw amino-acid sequence, 89 residues long: MRLLTLTEYCLLIFFTGFYLAVTGFTAKDIGLYIGIALIYIFSHIFSKRLLEKRGKENKQVHLFFSVLAIIGSVFITVLCIALVASFSK.

The next 3 membrane-spanning stretches (helical) occupy residues 5–27 (TLTE…GFTA), 32–51 (LYIG…KRLL), and 63–85 (LFFS…ALVA).

The protein resides in the cell membrane. This is an uncharacterized protein from Bacillus subtilis (strain 168).